The chain runs to 834 residues: Leucine--tRNA ligase (834 aa).

A 'HIGH' region motif is present at residues 42-52 (PYPSGKLHMGH). The 'KMSKS' region signature appears at 619–623 (KMSKS). Lys-622 provides a ligand contact to ATP.

It belongs to the class-I aminoacyl-tRNA synthetase family.

The protein localises to the cytoplasm. It carries out the reaction tRNA(Leu) + L-leucine + ATP = L-leucyl-tRNA(Leu) + AMP + diphosphate. The protein is Leucine--tRNA ligase of Actinobacillus pleuropneumoniae serotype 7 (strain AP76).